Here is a 321-residue protein sequence, read N- to C-terminus: MFQNNYNNNTNYNNNNFKLNDGNQIPSIGLGTYYSENPGEVGDAINNALKNGYRHIDGAAFYGNEKVIGNSLKEIFKEGEIKREDIFYTSKLWNSCHNSNLVVKHCVKTIEDLGIGYLDLYLIHWPIAFENSNPLGLTIEPLRDQNGNPIIAPVSIRETWQEMEKLVELGLVKSIGVSNFNVQNLVDLLTYAKIKPVVNQVEIHPYLTQFKLQEYCDKYEIKLVAYSPLGQGKCDFFSNKILKSIAGKYKKSVANVIFKWLNQRGIAAIPKSGNHSRIIENFNIFDFQLSNDDIEKINSLNANIRTCSPITFFGTPFYLFD.

22-31 (GNQIPSIGLG) provides a ligand contact to NADP(+). Tyr-62 functions as the Proton donor in the catalytic mechanism. Substrate is bound at residue His-124. Residue 227-281 (SPLGQGKCDFFSNKILKSIAGKYKKSVANVIFKWLNQRGIAAIPKSGNHSRIIEN) coordinates NADP(+).

The protein belongs to the aldo/keto reductase family.

The enzyme catalyses an alditol + NAD(+) = an aldose + NADH + H(+). The catalysed reaction is an alditol + NADP(+) = an aldose + NADPH + H(+). In terms of biological role, catalyzes the NADPH-dependent reduction of a wide variety of carbonyl-containing compounds to their corresponding alcohols with a broad range of catalytic efficiencies. The protein is Aldose reductase C (alrC) of Dictyostelium discoideum (Social amoeba).